The chain runs to 132 residues: Large ribosomal subunit protein bL21 (132 aa).

Residues alanine 111 to alanine 132 are disordered.

It belongs to the bacterial ribosomal protein bL21 family. As to quaternary structure, part of the 50S ribosomal subunit. Contacts protein L20.

This protein binds to 23S rRNA in the presence of protein L20. The sequence is that of Large ribosomal subunit protein bL21 from Dehalococcoides mccartyi (strain CBDB1).